A 289-amino-acid polypeptide reads, in one-letter code: Caffeoylpyruvate hydrolase (289 aa).

A divalent metal cation contacts are provided by glutamate 140, glutamate 142, and aspartate 171.

It belongs to the FAH family. Homodimer. Mg(2+) is required as a cofactor. The cofactor is Mn(2+).

The enzyme catalyses (E)-caffeoylpyruvate + H2O = (E)-caffeate + pyruvate + H(+). The protein operates within secondary metabolite biosynthesis. Its function is as follows. Caffeoylpyruvate hydrolase; part of the gene cluster that mediates the fungal bioluminescence cycle. Involved in the recycling of oxyluciferin, a pyruvic acid adduct of caffeic acid, to caffeic acid. The fungal bioluminescence cycle begins with the hispidin synthetase that catalyzes the formation of hispidin which is further hydroxylated by the hispidin-3-hydroxylase, yielding the fungal luciferin 3-hydroxyhispidin. The luciferase then produces an endoperoxide as a high-energy intermediate with decomposition that yields oxyluciferin (also known as caffeoylpyruvate) and light emission. Oxyluciferin can be recycled to caffeic acid by caffeoylpyruvate hydrolase. In Neonothopanus nambi (Agaricus nambi), this protein is Caffeoylpyruvate hydrolase.